The chain runs to 214 residues: Cytochrome b (214 aa).

4 helical membrane-spanning segments follow: residues 31–51 (FGSMLLACLMIQTVTGFFLAI), 75–96 (WIMQNTHAIGASMFFMCIYTHI), 111–131 (WLSGTTLLIVLMRTAFFGYVL), and 176–196 (FFALHFILPFIIISLSSIHII). Heme b contacts are provided by histidine 81 and histidine 95. Heme b-binding residues include histidine 180 and histidine 194. Histidine 199 contacts a ubiquinone.

This sequence belongs to the cytochrome b family. As to quaternary structure, the cytochrome bc1 complex contains 3 respiratory subunits (MT-CYB, CYC1 and UQCRFS1), 2 core proteins (UQCRC1 and UQCRC2) and probably 6 low-molecular weight proteins. It depends on heme b as a cofactor.

The protein localises to the mitochondrion inner membrane. Functionally, component of the ubiquinol-cytochrome c reductase complex (complex III or cytochrome b-c1 complex) that is part of the mitochondrial respiratory chain. The b-c1 complex mediates electron transfer from ubiquinol to cytochrome c. Contributes to the generation of a proton gradient across the mitochondrial membrane that is then used for ATP synthesis. The protein is Cytochrome b (MT-CYB) of Cerastes cerastes (Horned desert viper).